Reading from the N-terminus, the 1654-residue chain is Cortactin-binding protein 2 (1654 aa).

The disordered stretch occupies residues 1–31; the sequence is MATDGASCEPDFSRSPEDAAGATAEPAKKEF. The stretch at 119 to 276 forms a coiled coil; it reads RKMQERMSTQ…EQLKRGSDSK (158 aa). Disordered stretches follow at residues 361–432, 455–480, and 495–596; these read SHGD…LHSP, GNANDPDQNGNTSQSPPSRDVSPTSR, and QALS…PQGN. The span at 368–379 shows a compositional bias: low complexity; that stretch reads SSVPAAPTPSAS. Polar residues-rich tracts occupy residues 384–395 and 411–422; these read NGPSTGSAPDPT and QTPGTAAQSYSQ. The residue at position 499 (arginine 499) is an Asymmetric dimethylarginine. Over residues 518–531 the composition is skewed to polar residues; the sequence is DVSSHTPVSRTSLK. 6 ANK repeats span residues 710–740, 744–773, 777–806, 810–839, 843–872, and 913–943; these read GRPTLLQQAAAQGNVTLLSMLLNEEGLDINY, DGHSALYSAAKNGHTDCVRLLLNAQAQVNA, NGFTPLCAAAAQGHFKCIELLIANDANINH, GGQTPLYLACKNGNNECIKLLLGAGSDRSV, DGWTPVHAAVDTGNVDNLKLLMYYEAPIPG, and EGWTAAHIAASKGFKNCLEILCRHRGLEPER. Residues 1454 to 1478 are disordered; that stretch reads GAWRKVSTSPRKKSGHFSSPVWNKP. Phosphoserine is present on serine 1523. Residues 1556–1654 form a disordered region; it reads RRLHSSGNNP…KEEIWNLRKK (99 aa). The span at 1581–1598 shows a compositional bias: polar residues; the sequence is KEVSPLSSHQTTECSNNK. Positions 1623–1637 are enriched in low complexity; the sequence is SQNTKRSSSSSNTRQ. Over residues 1644-1654 the composition is skewed to basic and acidic residues; sequence SKEEIWNLRKK.

In terms of assembly, interacts with CTTN/cortactin SH3 domain. Interacts with STRN, STRN4/zinedin and MOB4/phocein; this interactions mediate the association with the STRIPAK core complex and may regulate dendritic spine distribution of the STRIPAK complex in hippocampal neurons. Activation of glutamate receptors weakens the interaction with STRN and STRN4.

The protein localises to the cytoplasm. It is found in the cell cortex. Its subcellular location is the cell projection. It localises to the dendritic spine. Its function is as follows. Regulates the dendritic spine distribution of CTTN/cortactin in hippocampal neurons, and thus controls dendritic spinogenesis and dendritic spine maintenance. Associates with the striatin-interacting phosphatase and kinase (STRIPAK) core complex to regulate dendritic spine distribution of the STRIPAK complex in hippocampal neurons. This is Cortactin-binding protein 2 (CTTNBP2) from Atelerix albiventris (Middle-African hedgehog).